Reading from the N-terminus, the 448-residue chain is Chromosomal replication initiator protein DnaA (448 aa).

The domain I, interacts with DnaA modulators stretch occupies residues 1–85 (MHDNLPQIWE…EVHIVVPSEE (85 aa)). A domain II region spans residues 85–110 (ERVGDTQNINARRSNAQSPIMGNSPL). The domain III, AAA+ region stretch occupies residues 111 to 327 (ILNPKYTFDT…GALIRIVAYS (217 aa)). 4 residues coordinate ATP: Gly-155, Gly-157, Lys-158, and Thr-159. A domain IV, binds dsDNA region spans residues 328–448 (SLTNSEVTVE…DAIIKELKSD (121 aa)).

This sequence belongs to the DnaA family. In terms of assembly, oligomerizes as a right-handed, spiral filament on DNA at oriC.

Its subcellular location is the cytoplasm. In terms of biological role, plays an essential role in the initiation and regulation of chromosomal replication. ATP-DnaA binds to the origin of replication (oriC) to initiate formation of the DNA replication initiation complex once per cell cycle. Binds the DnaA box (a 9 base pair repeat at the origin) and separates the double-stranded (ds)DNA. Forms a right-handed helical filament on oriC DNA; dsDNA binds to the exterior of the filament while single-stranded (ss)DNA is stabiized in the filament's interior. The ATP-DnaA-oriC complex binds and stabilizes one strand of the AT-rich DNA unwinding element (DUE), permitting loading of DNA polymerase. After initiation quickly degrades to an ADP-DnaA complex that is not apt for DNA replication. Binds acidic phospholipids. This chain is Chromosomal replication initiator protein DnaA, found in Alkaliphilus metalliredigens (strain QYMF).